The sequence spans 390 residues: Ribonuclease D (390 aa).

The 3'-5' exonuclease domain maps to 7-173 (ITDSATLAAL…TLFPMLLKEL (167 aa)). Residues 212 to 293 (KADILGRLKA…ENAEALRPEE (82 aa)) form the HRDC domain.

This sequence belongs to the RNase D family. Requires a divalent metal cation as cofactor.

The protein resides in the cytoplasm. It carries out the reaction Exonucleolytic cleavage that removes extra residues from the 3'-terminus of tRNA to produce 5'-mononucleotides.. Exonuclease involved in the 3' processing of various precursor tRNAs. Initiates hydrolysis at the 3'-terminus of an RNA molecule and releases 5'-mononucleotides. The protein is Ribonuclease D of Zymomonas mobilis subsp. mobilis (strain ATCC 31821 / ZM4 / CP4).